Consider the following 335-residue polypeptide: Nucleoid-associated protein YejK (335 aa).

The protein belongs to the YejK family.

The protein resides in the cytoplasm. It localises to the nucleoid. In Salmonella arizonae (strain ATCC BAA-731 / CDC346-86 / RSK2980), this protein is Nucleoid-associated protein YejK.